Here is a 534-residue protein sequence, read N- to C-terminus: CTP synthase (534 aa).

The segment at 1 to 267 (MTKYIFVTGG…DQIVCDHLKL (267 aa)) is amidoligase domain. A CTP-binding site is contributed by Ser-13. Ser-13 lines the UTP pocket. 14-19 (SIGKGI) is an ATP binding site. Position 54 (Tyr-54) interacts with L-glutamine. Asp-71 lines the ATP pocket. Asp-71 and Glu-141 together coordinate Mg(2+). Residues 148 to 150 (DIE), 188 to 193 (KTKPTQ), and Lys-224 each bind CTP. UTP contacts are provided by residues 188–193 (KTKPTQ) and Lys-224. Position 240 to 242 (240 to 242 (RNV)) interacts with ATP. Residues 292 to 534 (KIALVGKYVE…FVTAAIKNSN (243 aa)) form the Glutamine amidotransferase type-1 domain. L-glutamine is bound at residue Gly-354. Cys-381 (nucleophile; for glutamine hydrolysis) is an active-site residue. L-glutamine contacts are provided by residues 382–385 (LGMQ), Glu-405, and Arg-463. Active-site residues include His-508 and Glu-510.

This sequence belongs to the CTP synthase family. Homotetramer.

The catalysed reaction is UTP + L-glutamine + ATP + H2O = CTP + L-glutamate + ADP + phosphate + 2 H(+). It carries out the reaction L-glutamine + H2O = L-glutamate + NH4(+). The enzyme catalyses UTP + NH4(+) + ATP = CTP + ADP + phosphate + 2 H(+). Its pathway is pyrimidine metabolism; CTP biosynthesis via de novo pathway; CTP from UDP: step 2/2. Its activity is regulated as follows. Allosterically activated by GTP, when glutamine is the substrate; GTP has no effect on the reaction when ammonia is the substrate. The allosteric effector GTP functions by stabilizing the protein conformation that binds the tetrahedral intermediate(s) formed during glutamine hydrolysis. Inhibited by the product CTP, via allosteric rather than competitive inhibition. Its function is as follows. Catalyzes the ATP-dependent amination of UTP to CTP with either L-glutamine or ammonia as the source of nitrogen. Regulates intracellular CTP levels through interactions with the four ribonucleotide triphosphates. The protein is CTP synthase of Streptococcus pyogenes serotype M28 (strain MGAS6180).